A 157-amino-acid chain; its full sequence is Endoribonuclease YbeY (157 aa).

Zn(2+) is bound by residues His116, His120, and His126.

It belongs to the endoribonuclease YbeY family. It depends on Zn(2+) as a cofactor.

Its subcellular location is the cytoplasm. Single strand-specific metallo-endoribonuclease involved in late-stage 70S ribosome quality control and in maturation of the 3' terminus of the 16S rRNA. The chain is Endoribonuclease YbeY from Arthrobacter sp. (strain FB24).